Consider the following 61-residue polypeptide: Small ribosomal subunit protein bS21 (61 aa).

The disordered stretch occupies residues 40-61 (KPSVKRKKKSEAARKRKNKRRF). Residues 43-61 (VKRKKKSEAARKRKNKRRF) show a composition bias toward basic residues.

This sequence belongs to the bacterial ribosomal protein bS21 family.

The chain is Small ribosomal subunit protein bS21 from Ligilactobacillus salivarius (strain UCC118) (Lactobacillus salivarius).